A 149-amino-acid chain; its full sequence is Transcriptional regulator MraZ (149 aa).

SpoVT-AbrB domains follow at residues His-6 to Asp-52 and Ser-81 to Glu-124.

It belongs to the MraZ family. As to quaternary structure, forms oligomers.

It is found in the cytoplasm. The protein resides in the nucleoid. This is Transcriptional regulator MraZ from Maridesulfovibrio salexigens (strain ATCC 14822 / DSM 2638 / NCIMB 8403 / VKM B-1763) (Desulfovibrio salexigens).